A 303-amino-acid chain; its full sequence is Trans-aconitate 2-methyltransferase (303 aa).

The segment at 271 to 303 (EGSGGSGGSGGSAGSAGCAGSGGSVGPAGEAGR) is disordered. The span at 272–303 (GSGGSGGSGGSAGSAGCAGSGGSVGPAGEAGR) shows a compositional bias: gly residues.

It belongs to the methyltransferase superfamily. Tam family.

The protein localises to the cytoplasm. The enzyme catalyses trans-aconitate + S-adenosyl-L-methionine = (E)-3-(methoxycarbonyl)pent-2-enedioate + S-adenosyl-L-homocysteine. In terms of biological role, catalyzes the S-adenosylmethionine monomethyl esterification of trans-aconitate. The protein is Trans-aconitate 2-methyltransferase of Streptomyces coelicolor (strain ATCC BAA-471 / A3(2) / M145).